An 820-amino-acid polypeptide reads, in one-letter code: MAAGKFASLPRNMPVNHQFPLASSMDLLSSKSPLAERRTDAYQDVSIHGTLPRKKKGPPSIRSCDNAGHSKSPRQSSPLTQDIIQENPLQDRKGENFIFRDPYLLDPTLEYVKFSKERHIMDRTPERLKKELEEELLLSSEDLRSHAWYHGRIPRQVSENLVQRDGDFLVRDSLSSPGNFVLTCQWKNLAQHFKINRTVLRLSEAYSRVQYQFEMESFDSIPGLVRCYVGNRRPISQQSGAIIFQPINRTVPLWCLEERYGTSPGRGREGSLAEGRPDVVKRLSLTTGSSIQAREHSLPRGNLLRNKEKSGSQPACLDHVQDRKALTLKAHQSESHLPIGCKLPPQSPSMDTSPCPSSPVFRTGSEPTLSPALVRRFSSDARTGEALRGSDSQLCPKPPPKPCKVPFLKTPPSPSPWLTSEANYCELNPAFAVGCDRGAKLPMQAHDSHEMLLTAKQNGPSGPRNSGINYMILDGDDQARHWDPLAVQTDEGQEDKTKFVPPLMETVSSFRPNDFESKLLPPENKPLETAMLKHAKELFTNHDARVIAQHMLSVDCKVARILEVSEDRKRSMGVSSGLELITLPHGRQLRLDIIERHNTMAIGIAVDILGCTGTLENRAGTLNKIIQVAVELKDAMGDLYAFSAIMKALEMPQITRLEKTWTALRHHYTQTAILYEKQLKPFSKILHEGRESTYVPASNVSVPLLMPLVTLMERQAVTFEGTDMWENNDESCEILLNHLATARFMAEASESYRMNAERILADFQPDEEMTEILRTEFQMRLLWGSKGAEVNQNERYDKFNQILTALSRKLEPPSGKQAEL.

The residue at position 2 (Ala2) is an N-acetylalanine. Phosphoserine is present on residues Ser32, Ser72, Ser77, Ser176, and Ser284. Residues 40–81 form a disordered region; that stretch reads DAYQDVSIHGTLPRKKKGPPSIRSCDNAGHSKSPRQSSPLTQ. Residues 148–247 form the SH2 domain; the sequence is WYHGRIPRQV…QSGAIIFQPI (100 aa). Lys329 carries the N6-methyllysine modification. Positions 346–367 are disordered; sequence QSPSMDTSPCPSSPVFRTGSEP. Ser353, Ser358, and Ser370 each carry phosphoserine. Omega-N-methylarginine is present on Arg437. Ser466 is modified (phosphoserine). The region spanning 543–813 is the Ras-GEF domain; the sequence is DARVIAQHML…TALSRKLEPP (271 aa). Residues 739–743 form a mediates the interaction with BCAR1/p130CAS region; it reads LATAR.

In terms of assembly, part of a complex comprised of PTPRA, BCAR1, BCAR3 (via SH2 domain) and SRC; the formation of the complex is dependent on integrin mediated-tyrosine phosphorylation of PTPRA. Within the complex, interacts (via SH2 domain) with PTPRA (when phosphorylated on 'Tyr-825'). Interacts (via Ras-GEF domain) with BCAR1. Interacts (via Ras-GEF domain) with NEDD9. Interacts with PTK2B/FAK1. Interacts with PTPN1. Interacts (via SH2 domain) with EGFR (when tyrosine-phosphorylated). In terms of processing, phosphorylated on tyrosine residues. Abundantly expressed in the lung and brain, with lower expression in splenic lymphocytes and liver (at protein level). Expressed in splenic lymphocytes (at protein level). Expressed in the lymph node cortical region, periphery of the splenic white pulp and in alveolar lung fibroblasts. Expressed in epithelial cells in the lens equatorial region and early stage nucleated cortical lens fiber cells. Expressed in the thymus. Expressed in B-cells.

The protein localises to the cytoplasm. It is found in the cell junction. Its subcellular location is the focal adhesion. Functionally, acts as an adapter protein downstream of several growth factor receptors to promote cell proliferation, migration, and redistribution of actin fibers. Specifically involved in INS/insulin signaling pathway by mediating MAPK1/ERK2-MAPK3/ERK1 activation and DNA synthesis. Promotes insulin-mediated membrane ruffling. In response to vasoconstrictor peptide EDN1, involved in the activation of RAP1 downstream of PTK2B via interaction with phosphorylated BCAR1. Inhibits cell migration and invasion via regulation of TGFB-mediated matrix digestion, actin filament rearrangement, and inhibition of invadopodia activity. May inhibit TGFB-SMAD signaling, via facilitating BCAR1 and SMAD2 and/or SMAD3 interaction. Regulates EGF-induced DNA synthesis. Required for the maintenance of ocular lens morphology and structural integrity, potentially via regulation of focal adhesion complex signaling. Acts upstream of PTPRA to regulate the localization of BCAR1 and PTPRA to focal adhesions, via regulation of SRC-mediated phosphorylation of PTPRA. Positively regulates integrin-induced tyrosine phosphorylation of BCAR1. Acts as a guanine nucleotide exchange factor (GEF) for small GTPases RALA, RAP1A and RRAS. However, in a contrasting study, lacks GEF activity towards RAP1. The chain is Breast cancer anti-estrogen resistance protein 3 homolog (Bcar3) from Mus musculus (Mouse).